Here is a 207-residue protein sequence, read N- to C-terminus: Interleukin-6 (207 aa).

The first 18 residues, 1–18, serve as a signal peptide directing secretion; the sequence is MKFFSIASLGLLLVVATA. Positions 26–47 are disordered; that stretch reads REDGENSVTRNKPTRASSGKTR. Residues 31–44 are compositionally biased toward polar residues; that stretch reads NSVTRNKPTRASSG. A disulfide bond links cysteine 65 and cysteine 71. The residue at position 74 (serine 74) is a Phosphoserine. A disulfide bridge links cysteine 94 with cysteine 104.

Belongs to the IL-6 superfamily. In terms of assembly, component of a hexamer of two molecules each of IL6, IL6R and IL6ST; first binds to IL6R to associate with the signaling subunit IL6ST. Interacts with IL6R (via the N-terminal ectodomain); this interaction may be affected by IL6R-binding with SORL1, hence decreasing IL6 cis signaling. Interacts with SORL1 (via the N-terminal ectodomain); this interaction leads to IL6 internalization and lysosomal degradation. May form a trimeric complex with the soluble SORL1 ectodomain and soluble IL6R receptor; this interaction might stabilize circulating IL6, hence promoting IL6 trans signaling.

The protein localises to the secreted. Its function is as follows. Cytokine with a wide variety of biological functions in immunity, tissue regeneration, and metabolism. Binds to IL6R, then the complex associates to the signaling subunit IL6ST/gp130 to trigger the intracellular IL6-signaling pathway. The interaction with the membrane-bound IL6R and IL6ST stimulates 'classic signaling', whereas the binding of IL6 and soluble IL6R to IL6ST stimulates 'trans-signaling'. Alternatively, 'cluster signaling' occurs when membrane-bound IL6:IL6R complexes on transmitter cells activate IL6ST receptors on neighboring receiver cells. Functionally, IL6 is a potent inducer of the acute phase response. Rapid production of IL6 contributes to host defense during infection and tissue injury, but excessive IL6 synthesis is involved in disease pathology. In the innate immune response, is synthesized by myeloid cells, such as macrophages and dendritic cells, upon recognition of pathogens through toll-like receptors (TLRs) at the site of infection or tissue injury. In the adaptive immune response, is required for the differentiation of B cells into immunoglobulin-secreting cells. Plays a major role in the differentiation of CD4(+) T cell subsets. Essential factor for the development of T follicular helper (Tfh) cells that are required for the induction of germinal-center formation. Required to drive naive CD4(+) T cells to the Th17 lineage. Also required for proliferation of myeloma cells and the survival of plasmablast cells. Acts as an essential factor in bone homeostasis and on vessels directly or indirectly by induction of VEGF, resulting in increased angiogenesis activity and vascular permeability. Induces, through 'trans-signaling' and synergistically with IL1B and TNF, the production of VEGF. Involved in metabolic controls, is discharged into the bloodstream after muscle contraction increasing lipolysis and improving insulin resistance. 'Trans-signaling' in central nervous system also regulates energy and glucose homeostasis. Mediates, through GLP-1, crosstalk between insulin-sensitive tissues, intestinal L cells and pancreatic islets to adapt to changes in insulin demand. Also acts as a myokine. Plays a protective role during liver injury, being required for maintenance of tissue regeneration. Also has a pivotal role in iron metabolism by regulating HAMP/hepcidin expression upon inflammation or bacterial infection. Through activation of IL6ST-YAP-NOTCH pathway, induces inflammation-induced epithelial regeneration. This Marmota monax (Woodchuck) protein is Interleukin-6 (IL6).